Consider the following 255-residue polypeptide: tRNA pseudouridine synthase B (255 aa).

Asp58 acts as the Nucleophile in catalysis.

Belongs to the pseudouridine synthase TruB family. Type 1 subfamily.

It carries out the reaction uridine(55) in tRNA = pseudouridine(55) in tRNA. Responsible for synthesis of pseudouridine from uracil-55 in the psi GC loop of transfer RNAs. In Chlorobium chlorochromatii (strain CaD3), this protein is tRNA pseudouridine synthase B.